A 172-amino-acid chain; its full sequence is Early nodulin-like protein 17 (172 aa).

The signal sequence occupies residues 1–26 (MARFTVLITAVVLAFLMAAPMPGVTA). A Phytocyanin domain is found at 27 to 127 (KKYTVGENKF…GMKLSVKVEK (101 aa)). 4 N-linked (GlcNAc...) asparagine glycosylation sites follow: asparagine 42, asparagine 73, asparagine 88, and asparagine 101. The cysteines at positions 80 and 115 are disulfide-linked. Glycine 141 carries GPI-anchor amidated glycine lipidation. A propeptide spans 142–172 (SVSMVTGLAQFMIPVSLFAFPAMWDVISRMW) (removed in mature form).

The protein belongs to the early nodulin-like (ENODL) family.

Its subcellular location is the cell membrane. Its function is as follows. May act as a carbohydrate transporter. This chain is Early nodulin-like protein 17, found in Arabidopsis thaliana (Mouse-ear cress).